The chain runs to 549 residues: MLNQKIQNPNPDELMIEIDLCYELDPYELKLDEMIEAEPEPEMIEGLPASDALTPADRYLELFEHVQSAKIFPDSKTFPDCAPKMDPLDILIRYRKVRRHRDFDLRQFVENHFWLPEVYSSEYVSNPENSLKEHIDQLWPVLTREPQDHIPWSSLLALPQSYIVPGGRFSETYYWDSYFTMLGLAESGREDLLKCMADNFAWMIENYGHIPNGNRTYYLSRSQPPVFALMVELFEEDGVRGARRYLDHLKMEYAFWMDGAESLIPNQAYRHVVRMPDGSLLNRYWDDRDTPRDESWLEDVETAKHSGRPPNEVYRDLRAGAASGWDYSSRWLRDAGRLASIRTTQFIPIDLNAFLFKLESAIANISALKGDKETETLFRQKANARRDAVNRYLWDDENGIYRDYDWRREQLALFSAAAIVPLYVGMASHEQADRLGDAVRNRLLTPGGILATEYETGEQWDKPNGWAPLQWMAIQGFKMYGDDHLGDEIAHSWLQTVNLFYQQHHKLIEKYHIAGGTPREGGGGEYPLQDGFGWTNGVVRRLISLYGEP.

Substrate is bound by residues arginine 168, 175–176 (WD), asparagine 212, 221–223 (RSQ), 292–294 (RDE), and glycine 324. Residues aspartate 326 and glutamate 509 each act as proton donor/acceptor in the active site. Glutamate 525 provides a ligand contact to substrate.

This sequence belongs to the glycosyl hydrolase 37 family. Monomer.

The protein localises to the cytoplasm. It carries out the reaction alpha,alpha-trehalose + H2O = alpha-D-glucose + beta-D-glucose. Its pathway is glycan degradation; trehalose degradation; D-glucose from alpha,alpha-trehalose: step 1/1. Its function is as follows. Hydrolyzes trehalose to glucose. Could be involved, in cells returning to low osmolarity conditions, in the utilization of the accumulated cytoplasmic trehalose, which was synthesized in response to high osmolarity. The protein is Cytoplasmic trehalase of Escherichia fergusonii (strain ATCC 35469 / DSM 13698 / CCUG 18766 / IAM 14443 / JCM 21226 / LMG 7866 / NBRC 102419 / NCTC 12128 / CDC 0568-73).